We begin with the raw amino-acid sequence, 117 residues long: Large ribosomal subunit protein bL19 (117 aa).

It belongs to the bacterial ribosomal protein bL19 family.

Functionally, this protein is located at the 30S-50S ribosomal subunit interface and may play a role in the structure and function of the aminoacyl-tRNA binding site. In Shewanella woodyi (strain ATCC 51908 / MS32), this protein is Large ribosomal subunit protein bL19.